The following is a 369-amino-acid chain: 4-hydroxy-3-methylbut-2-en-1-yl diphosphate synthase (flavodoxin) (369 aa).

4 residues coordinate [4Fe-4S] cluster: Cys-270, Cys-273, Cys-305, and Glu-312.

The protein belongs to the IspG family. Requires [4Fe-4S] cluster as cofactor.

The catalysed reaction is (2E)-4-hydroxy-3-methylbut-2-enyl diphosphate + oxidized [flavodoxin] + H2O + 2 H(+) = 2-C-methyl-D-erythritol 2,4-cyclic diphosphate + reduced [flavodoxin]. Its pathway is isoprenoid biosynthesis; isopentenyl diphosphate biosynthesis via DXP pathway; isopentenyl diphosphate from 1-deoxy-D-xylulose 5-phosphate: step 5/6. In terms of biological role, converts 2C-methyl-D-erythritol 2,4-cyclodiphosphate (ME-2,4cPP) into 1-hydroxy-2-methyl-2-(E)-butenyl 4-diphosphate. The chain is 4-hydroxy-3-methylbut-2-en-1-yl diphosphate synthase (flavodoxin) from Pseudomonas entomophila (strain L48).